Here is a 327-residue protein sequence, read N- to C-terminus: Transaldolase (327 aa).

Catalysis depends on Lys132, which acts as the Schiff-base intermediate with substrate.

The protein belongs to the transaldolase family. Type 1 subfamily. As to quaternary structure, homodimer.

Its subcellular location is the cytoplasm. The catalysed reaction is D-sedoheptulose 7-phosphate + D-glyceraldehyde 3-phosphate = D-erythrose 4-phosphate + beta-D-fructose 6-phosphate. It participates in carbohydrate degradation; pentose phosphate pathway; D-glyceraldehyde 3-phosphate and beta-D-fructose 6-phosphate from D-ribose 5-phosphate and D-xylulose 5-phosphate (non-oxidative stage): step 2/3. Transaldolase is important for the balance of metabolites in the pentose-phosphate pathway. This is Transaldolase from Chlamydia felis (strain Fe/C-56) (Chlamydophila felis).